Here is a 101-residue protein sequence, read N- to C-terminus: MRIVIYSMLVLLIAIQYPLWLGKGGWLKVYEMERQVELQEAKNSLLALRNAKLSGDVKDLKDGTRAIEERACVEHGLIKEGEFFVQILPADKSSDTQVTKQ.

The Cytoplasmic portion of the chain corresponds to 1–3 (MRI). A helical transmembrane segment spans residues 4-21 (VIYSMLVLLIAIQYPLWL). Over 22–101 (GKGGWLKVYE…KSSDTQVTKQ (80 aa)) the chain is Periplasmic. Positions 33–53 (ERQVELQEAKNSLLALRNAKL) form a coiled coil.

This sequence belongs to the FtsB family. As to quaternary structure, part of a complex composed of FtsB, FtsL and FtsQ.

The protein resides in the cell inner membrane. Its function is as follows. Essential cell division protein. May link together the upstream cell division proteins, which are predominantly cytoplasmic, with the downstream cell division proteins, which are predominantly periplasmic. This Polynucleobacter necessarius subsp. necessarius (strain STIR1) protein is Cell division protein FtsB.